The primary structure comprises 775 residues: Suppressor of glycerol defect protein 1 (775 aa).

Basic residues-rich tracts occupy residues 1–11 (MRPIKKSRSLK) and 28–49 (RRGKRNHNLPHREKRKFARISR). Disordered regions lie at residues 1 to 101 (MRPI…LLDP) and 152 to 253 (IDDI…GGDK). Basic and acidic residues-rich tracts occupy residues 52–79 (NGYENRKITEEGDSKSSELNDDYLDAHR), 177–193 (TGDHGSVDELESEREGN), and 209–223 (DEFHQPETKPIRMDP). The MIF4G domain occupies 262–463 (RRKLQGSLNK…ESITNLKENK (202 aa)). One can recognise an MI domain in the interval 565 to 689 (TLRTSIFVAL…PLTILKHVDF (125 aa)).

This sequence belongs to the CWC22 family.

The protein resides in the nucleus. It is found in the nucleolus. In terms of biological role, involved in osmoregulatory glycerol response. The chain is Suppressor of glycerol defect protein 1 (sgd1) from Schizosaccharomyces pombe (strain 972 / ATCC 24843) (Fission yeast).